The following is a 383-amino-acid chain: Glycoprotein gp2 (383 aa).

An N-terminal signal peptide occupies residues 1–25 (MGFIYARKLLLCMAVSIYAIGSTTT). A compositionally biased stretch (low complexity) spans 24–75 (TTTETTTSSSSTSGSGQSTSSGTTNSSSSPTTSPPTTSSSPPTSTHTSSPST). The segment at 24–136 (TTTETTTSSS…RNNSIEIVPQ (113 aa)) is disordered. The N-linked (GlcNAc...) asparagine; by host glycan is linked to Asn48. Over residues 81–91 (HAGHHRGRAGG) the composition is skewed to basic residues. Asn128 is a glycosylation site (N-linked (GlcNAc...) asparagine; by host). A helical membrane pass occupies residues 354-371 (LVAATTLTVTILCLLCCL).

It localises to the virion membrane. In terms of biological role, the glycoprotein gp2 from the avirulent strain Kentucky A (KyA) is probably non functional since this strain harbors an in-frame deletion of 1,242 nucleotides in gene 71. This chain is Glycoprotein gp2 (US4), found in Equus caballus (Horse).